We begin with the raw amino-acid sequence, 145 residues long: Large ribosomal subunit protein uL15 (145 aa).

A disordered region spans residues 1–52; the sequence is MRLNTLSPAAGSKRVKHRPGRGIGSGLGKTGGRGVKGQTSRSGGGKVRNGFE. Gly residues-rich tracts occupy residues 21 to 35 and 42 to 52; these read RGIGSGLGKTGGRGV and SGGGKVRNGFE.

This sequence belongs to the universal ribosomal protein uL15 family. As to quaternary structure, part of the 50S ribosomal subunit.

Binds to the 23S rRNA. This chain is Large ribosomal subunit protein uL15, found in Aeromonas hydrophila subsp. hydrophila (strain ATCC 7966 / DSM 30187 / BCRC 13018 / CCUG 14551 / JCM 1027 / KCTC 2358 / NCIMB 9240 / NCTC 8049).